We begin with the raw amino-acid sequence, 434 residues long: Histidinol dehydrogenase (434 aa).

Residues Tyr130, Gln188, and Asn211 each coordinate NAD(+). Residues Ser237, Gln259, and His262 each coordinate substrate. Gln259 and His262 together coordinate Zn(2+). Catalysis depends on proton acceptor residues Glu326 and His327. Substrate-binding residues include His327, Asp360, Glu414, and His419. Asp360 contributes to the Zn(2+) binding site. His419 provides a ligand contact to Zn(2+).

It belongs to the histidinol dehydrogenase family. As to quaternary structure, homodimer. It depends on Zn(2+) as a cofactor.

It carries out the reaction L-histidinol + 2 NAD(+) + H2O = L-histidine + 2 NADH + 3 H(+). Its pathway is amino-acid biosynthesis; L-histidine biosynthesis; L-histidine from 5-phospho-alpha-D-ribose 1-diphosphate: step 9/9. Catalyzes the sequential NAD-dependent oxidations of L-histidinol to L-histidinaldehyde and then to L-histidine. The polypeptide is Histidinol dehydrogenase (Shigella boydii serotype 4 (strain Sb227)).